Consider the following 203-residue polypeptide: Excretory canal abnormal exc-13 (203 aa).

A signal peptide spans 1 to 20; it reads MIGFLKFALIGTVLLGVANG. Residues Asn-32, Asn-84, and Asn-188 are each glycosylated (N-linked (GlcNAc...) asparagine).

This sequence belongs to the UPF0376 family.

Its subcellular location is the secreted. This Caenorhabditis elegans protein is Excretory canal abnormal exc-13.